Consider the following 288-residue polypeptide: Hemin import ATP-binding protein HmuV (288 aa).

The 239-residue stretch at Leu-31–Pro-269 folds into the ABC transporter domain. Gly-68–Ser-75 provides a ligand contact to ATP.

The protein belongs to the ABC transporter superfamily. Heme (hemin) importer (TC 3.A.1.14.5) family. In terms of assembly, the complex is composed of two ATP-binding proteins (HmuV), two transmembrane proteins (HmuU) and a solute-binding protein (HmuT).

Its subcellular location is the cell membrane. Functionally, part of the ABC transporter complex HmuTUV involved in hemin import. Responsible for energy coupling to the transport system. The chain is Hemin import ATP-binding protein HmuV from Nocardia farcinica (strain IFM 10152).